We begin with the raw amino-acid sequence, 174 residues long: Shikimate kinase 2 (174 aa).

An ATP-binding site is contributed by 12-17 (GAGKTT). Mg(2+)-binding residues include T16 and D32. Positions 34, 58, and 79 each coordinate substrate. An LID domain region spans residues 112–126 (AEDPEEAQRPSLTGK). R120 is an ATP binding site. Residue R139 participates in substrate binding. Q155 contributes to the ATP binding site.

Belongs to the shikimate kinase family. AroL subfamily. In terms of assembly, monomer. Requires Mg(2+) as cofactor.

The protein localises to the cytoplasm. The catalysed reaction is shikimate + ATP = 3-phosphoshikimate + ADP + H(+). The protein operates within metabolic intermediate biosynthesis; chorismate biosynthesis; chorismate from D-erythrose 4-phosphate and phosphoenolpyruvate: step 5/7. Its function is as follows. Catalyzes the specific phosphorylation of the 3-hydroxyl group of shikimic acid using ATP as a cosubstrate. In Yersinia pseudotuberculosis serotype IB (strain PB1/+), this protein is Shikimate kinase 2.